The following is a 256-amino-acid chain: Type III pantothenate kinase (256 aa).

7-14 is a binding site for ATP; it reads DIGNTNVV. 108 to 111 serves as a coordination point for substrate; it reads GADC. Residue Asp110 is the Proton acceptor of the active site. Residue Asp130 participates in K(+) binding. Thr133 is an ATP binding site. Thr185 is a substrate binding site.

It belongs to the type III pantothenate kinase family. Homodimer. It depends on NH4(+) as a cofactor. Requires K(+) as cofactor.

The protein resides in the cytoplasm. The enzyme catalyses (R)-pantothenate + ATP = (R)-4'-phosphopantothenate + ADP + H(+). It functions in the pathway cofactor biosynthesis; coenzyme A biosynthesis; CoA from (R)-pantothenate: step 1/5. Its function is as follows. Catalyzes the phosphorylation of pantothenate (Pan), the first step in CoA biosynthesis. This Bifidobacterium adolescentis (strain ATCC 15703 / DSM 20083 / NCTC 11814 / E194a) protein is Type III pantothenate kinase.